The following is a 495-amino-acid chain: Cysteine--tRNA ligase (495 aa).

C29 contributes to the Zn(2+) binding site. The 'HIGH' region signature appears at 31 to 41; the sequence is VTVYDDSHVGH. Positions 209, 234, and 238 each coordinate Zn(2+). A 'KMSKS' region motif is present at residues 266–270; the sequence is KMSKS. An ATP-binding site is contributed by K269.

It belongs to the class-I aminoacyl-tRNA synthetase family. As to quaternary structure, monomer. It depends on Zn(2+) as a cofactor.

It is found in the cytoplasm. The enzyme catalyses tRNA(Cys) + L-cysteine + ATP = L-cysteinyl-tRNA(Cys) + AMP + diphosphate. The chain is Cysteine--tRNA ligase (cysS) from Aquifex aeolicus (strain VF5).